The chain runs to 275 residues: Gibberellin-regulated protein 14 (275 aa).

The signal sequence occupies residues 1–21; that stretch reads MALSLLSVFIFFHVFTNVVFA. The segment at 34 to 207 is disordered; that stretch reads PTPTLPSPSP…TAPPVKPPTP (174 aa). Residues 36 to 207 are compositionally biased toward pro residues; it reads PTLPSPSPAT…TAPPVKPPTP (172 aa).

Belongs to the GASA family. In terms of processing, six disulfide bonds may be present. Expressed in flower abscission zone, style, stamen filaments and lateral roots.

It is found in the secreted. Functionally, gibberellin-regulated protein that may function in hormonal controlled steps of development such as seed germination, flowering and seed maturation. This is Gibberellin-regulated protein 14 (GASA14) from Arabidopsis thaliana (Mouse-ear cress).